We begin with the raw amino-acid sequence, 411 residues long: Bestrophin homolog 26 (411 aa).

4 helical membrane-spanning segments follow: residues 30–50 (FTAI…FMVI), 73–93 (SHQE…SSVV), 235–255 (IPIP…YFAV), and 272–292 (TWIT…MGWM).

Belongs to the anion channel-forming bestrophin (TC 1.A.46) family. Calcium-sensitive chloride channel subfamily. In terms of assembly, forms oligomers.

The protein localises to the cell membrane. In terms of biological role, forms chloride channels. The chain is Bestrophin homolog 26 (best-26) from Caenorhabditis elegans.